We begin with the raw amino-acid sequence, 508 residues long: Protoporphyrinogen oxidase 2, chloroplastic/mitochondrial (508 aa).

The transit peptide at M1–V22 directs the protein to the chloroplast and mitochondrion. FAD contacts are provided by residues G23–G28, E46–A47, and G68–T71. A disordered region spans residues K219–S239. Residues V268 and L475–V477 each bind FAD.

The protein belongs to the protoporphyrinogen/coproporphyrinogen oxidase family. Protoporphyrinogen oxidase subfamily. Requires FAD as cofactor.

The protein localises to the plastid. It localises to the chloroplast. The protein resides in the mitochondrion. The enzyme catalyses protoporphyrinogen IX + 3 O2 = protoporphyrin IX + 3 H2O2. Its pathway is porphyrin-containing compound metabolism; protoporphyrin-IX biosynthesis; protoporphyrin-IX from protoporphyrinogen-IX: step 1/1. The protein operates within porphyrin-containing compound metabolism; chlorophyll biosynthesis. Its function is as follows. Catalyzes the 6-electron oxidation of protoporphyrinogen-IX to form protoporphyrin-IX. This is Protoporphyrinogen oxidase 2, chloroplastic/mitochondrial (PPOX2) from Arabidopsis thaliana (Mouse-ear cress).